Consider the following 334-residue polypeptide: Nucleoid-associated protein SG1574 (334 aa).

The protein belongs to the YejK family.

The protein localises to the cytoplasm. Its subcellular location is the nucleoid. The sequence is that of Nucleoid-associated protein SG1574 from Sodalis glossinidius (strain morsitans).